The chain runs to 279 residues: Biotin synthase (279 aa).

A Radical SAM core domain is found at 1-227 (MKVYLCAISN…NAMIMVAGGR (227 aa)). 3 residues coordinate [4Fe-4S] cluster: Cys-16, Cys-20, and Cys-23. Residues Cys-60, Cys-95, and Cys-153 each coordinate [2Fe-2S] cluster.

The protein belongs to the radical SAM superfamily. Biotin synthase family. As to quaternary structure, homodimer. It depends on [4Fe-4S] cluster as a cofactor. [2Fe-2S] cluster is required as a cofactor.

The enzyme catalyses (4R,5S)-dethiobiotin + (sulfur carrier)-SH + 2 reduced [2Fe-2S]-[ferredoxin] + 2 S-adenosyl-L-methionine = (sulfur carrier)-H + biotin + 2 5'-deoxyadenosine + 2 L-methionine + 2 oxidized [2Fe-2S]-[ferredoxin]. The protein operates within cofactor biosynthesis; biotin biosynthesis; biotin from 7,8-diaminononanoate: step 2/2. In terms of biological role, catalyzes the conversion of dethiobiotin (DTB) to biotin by the insertion of a sulfur atom into dethiobiotin via a radical-based mechanism. This chain is Biotin synthase, found in Nitratiruptor sp. (strain SB155-2).